A 140-amino-acid chain; its full sequence is Lysozyme E (140 aa).

A signal peptide spans M1 to G18. One can recognise a C-type lysozyme domain in the interval R19 to F140. Cystine bridges form between C24-C139, C45-C129, C80-C96, and C92-C110. Residues E50 and D68 contribute to the active site.

Belongs to the glycosyl hydrolase 22 family. Found in the midgut.

The catalysed reaction is Hydrolysis of (1-&gt;4)-beta-linkages between N-acetylmuramic acid and N-acetyl-D-glucosamine residues in a peptidoglycan and between N-acetyl-D-glucosamine residues in chitodextrins.. Its function is as follows. Unlikely to play an active role in the humoral immune defense. May have a function in the digestion of bacteria in the food. This Drosophila melanogaster (Fruit fly) protein is Lysozyme E (LysE).